The following is a 103-amino-acid chain: Large ribosomal subunit protein bL21 (103 aa).

The protein belongs to the bacterial ribosomal protein bL21 family. As to quaternary structure, part of the 50S ribosomal subunit. Contacts protein L20.

Functionally, this protein binds to 23S rRNA in the presence of protein L20. The protein is Large ribosomal subunit protein bL21 of Borrelia garinii subsp. bavariensis (strain ATCC BAA-2496 / DSM 23469 / PBi) (Borreliella bavariensis).